Reading from the N-terminus, the 249-residue chain is Aspartate/glutamate leucyltransferase (249 aa).

It belongs to the R-transferase family. Bpt subfamily.

It localises to the cytoplasm. It carries out the reaction N-terminal L-glutamyl-[protein] + L-leucyl-tRNA(Leu) = N-terminal L-leucyl-L-glutamyl-[protein] + tRNA(Leu) + H(+). The catalysed reaction is N-terminal L-aspartyl-[protein] + L-leucyl-tRNA(Leu) = N-terminal L-leucyl-L-aspartyl-[protein] + tRNA(Leu) + H(+). Functionally, functions in the N-end rule pathway of protein degradation where it conjugates Leu from its aminoacyl-tRNA to the N-termini of proteins containing an N-terminal aspartate or glutamate. The protein is Aspartate/glutamate leucyltransferase of Brucella melitensis biotype 2 (strain ATCC 23457).